The primary structure comprises 692 residues: Vacuolar amino acid transporter 3 (692 aa).

Polar residues predominate over residues 1 to 14; sequence MNGKEVSSGSGRTQ. The interval 1-71 is disordered; sequence MNGKEVSSGS…TGGLLKKPPL (71 aa). The span at 15–24 shows a compositional bias: low complexity; sequence SNNNKKNNNG. Polar residues predominate over residues 28–38; the sequence is GISHASGSPLT. A phosphoserine mark is found at Ser-59, Ser-119, and Ser-121. Disordered regions lie at residues 135–170 and 258–294; these read KWTN…SNRK and DLSE…GRHP. A compositionally biased stretch (low complexity) spans 141–153; sequence PSSPSQYQYPSQP. The segment covering 154-167 has biased composition (polar residues); sequence ALSTSIPSQAPSFS. Position 165 is a phosphoserine (Ser-165). Positions 258–279 are enriched in acidic residues; that stretch reads DLSEEEEEEEETEEEPEEEALE. The next 11 helical transmembrane spans lie at 302–322, 329–349, 374–394, 412–432, 443–463, 483–503, 519–539, 561–581, 607–627, 630–650, and 665–685; these read AVLL…PKAF, FSAL…VSLI, FAIL…YTVF, GSIS…PLSL, ALIA…YSIY, WSLF…LIPI, AVMC…YAAF, VQLL…FPAI, YFRC…ANDL, FVSL…PPLL, and LLLD…TSWQ.

The protein belongs to the amino acid/polyamine transporter 2 family.

It localises to the vacuole membrane. In terms of biological role, involved in amino acid efflux from the vacuole to the cytoplasm. Capable of transporting large neutral amino acids including tyrosine, glutamine, asparagine, isoleucine and leucine. In Saccharomyces cerevisiae (strain ATCC 204508 / S288c) (Baker's yeast), this protein is Vacuolar amino acid transporter 3 (AVT3).